The primary structure comprises 129 residues: Histone H2A type 2-C (129 aa).

Positions 1 to 22 are disordered; that stretch reads MSGRGKQGGKARAKAKSRSSRA. Ser2 is modified (N-acetylserine). Ser2 carries the phosphoserine; by RPS6KA5 modification. Arg4 is subject to Citrulline; alternate. Arg4 carries the post-translational modification Symmetric dimethylarginine; by PRMT5; alternate. N6-(2-hydroxyisobutyryl)lysine; alternate is present on residues Lys6 and Lys10. Lys6 bears the N6-acetyllysine; alternate mark. Basic residues predominate over residues 7–19; it reads QGGKARAKAKSRS. At Lys10 the chain carries N6-lactoyllysine; alternate. Lys10 is modified (N6-succinyllysine; alternate). Residues Lys14 and Lys16 each participate in a glycyl lysine isopeptide (Lys-Gly) (interchain with G-Cter in ubiquitin) cross-link. The residue at position 37 (Lys37) is an N6-(2-hydroxyisobutyryl)lysine; alternate. Lys37 carries the N6-(beta-hydroxybutyryl)lysine; alternate modification. Lys37 carries the post-translational modification N6-crotonyllysine; alternate. Residues Lys75 and Lys76 each carry the N6-(2-hydroxyisobutyryl)lysine modification. Residue Lys96 is modified to N6-(2-hydroxyisobutyryl)lysine; alternate. Lys96 bears the N6-succinyllysine; alternate mark. At Lys96 the chain carries N6-glutaryllysine; alternate. Position 100 is an N6-glutaryllysine (Lys100). At Gln105 the chain carries N5-methylglutamine. Lys119 carries the N6-(2-hydroxyisobutyryl)lysine; alternate modification. Lys119 and Lys120 each carry N6-crotonyllysine; alternate. 2 positions are modified to N6-glutaryllysine; alternate: Lys119 and Lys120. Lys120 participates in a covalent cross-link: Glycyl lysine isopeptide (Lys-Gly) (interchain with G-Cter in ubiquitin); alternate. Residue Thr121 is modified to Phosphothreonine; by DCAF1. At Ser123 the chain carries Phosphoserine. Position 125 is an N6-crotonyllysine (Lys125).

The protein belongs to the histone H2A family. In terms of assembly, the nucleosome is a histone octamer containing two molecules each of H2A, H2B, H3 and H4 assembled in one H3-H4 heterotetramer and two H2A-H2B heterodimers. The octamer wraps approximately 147 bp of DNA. Post-translationally, deiminated on Arg-4 in granulocytes upon calcium entry. In terms of processing, monoubiquitination of Lys-120 (H2AK119Ub) by RING1, TRIM37 and RNF2/RING2 complex gives a specific tag for epigenetic transcriptional repression and participates in X chromosome inactivation of female mammals. It is involved in the initiation of both imprinted and random X inactivation. Ubiquitinated H2A is enriched in inactive X chromosome chromatin. Ubiquitination of H2A functions downstream of methylation of 'Lys-27' of histone H3 (H3K27me). H2AK119Ub by RNF2/RING2 can also be induced by ultraviolet and may be involved in DNA repair. Following DNA double-strand breaks (DSBs), it is ubiquitinated through 'Lys-63' linkage of ubiquitin moieties by the E2 ligase UBE2N and the E3 ligases RNF8 and RNF168, leading to the recruitment of repair proteins to sites of DNA damage. Ubiquitination at Lys-14 and Lys-16 (H2AK13Ub and H2AK15Ub, respectively) in response to DNA damage is initiated by RNF168 that mediates monoubiquitination at these 2 sites, and 'Lys-63'-linked ubiquitin are then conjugated to monoubiquitin; RNF8 is able to extend 'Lys-63'-linked ubiquitin chains in vitro. H2AK119Ub and ionizing radiation-induced 'Lys-63'-linked ubiquitination (H2AK13Ub and H2AK15Ub) are distinct events. Phosphorylation on Ser-2 (H2AS1ph) is enhanced during mitosis. Phosphorylation on Ser-2 by RPS6KA5/MSK1 directly represses transcription. Acetylation of H3 inhibits Ser-2 phosphorylation by RPS6KA5/MSK1. Phosphorylation at Thr-121 (H2AT120ph) by DCAF1 is present in the regulatory region of many tumor suppresor genes and down-regulates their transcription. Post-translationally, symmetric dimethylation on Arg-4 by the PRDM1/PRMT5 complex may play a crucial role in the germ-cell lineage. In terms of processing, glutamine methylation at Gln-105 (H2AQ104me) by FBL is specifically dedicated to polymerase I. It is present at 35S ribosomal DNA locus and impairs binding of the FACT complex. Crotonylation (Kcr) is specifically present in male germ cells and marks testis-specific genes in post-meiotic cells, including X-linked genes that escape sex chromosome inactivation in haploid cells. Crotonylation marks active promoters and enhancers and confers resistance to transcriptional repressors. It is also associated with post-meiotically activated genes on autosomes. Post-translationally, lactylated in macrophages by EP300/P300 by using lactoyl-CoA directly derived from endogenous or exogenous lactate, leading to stimulates gene transcription.

It localises to the nucleus. Its subcellular location is the chromosome. In terms of biological role, core component of nucleosome. Nucleosomes wrap and compact DNA into chromatin, limiting DNA accessibility to the cellular machineries which require DNA as a template. Histones thereby play a central role in transcription regulation, DNA repair, DNA replication and chromosomal stability. DNA accessibility is regulated via a complex set of post-translational modifications of histones, also called histone code, and nucleosome remodeling. This Bos taurus (Bovine) protein is Histone H2A type 2-C.